We begin with the raw amino-acid sequence, 596 residues long: uncharacterized protein (596 aa).

Residues 44–203 form the Helicase ATP-binding domain; it reads KYLASQPRDF…PFVTYALDAD (160 aa). In terms of domain architecture, Helicase C-terminal spans 285–432; sequence RLRQLRTHVP…PHRESTDNPL (148 aa). Disordered stretches follow at residues 420–444 and 506–533; these read LGKP…QTEQ and EQLQ…SVHG. Residues 510–523 show a composition bias toward polar residues; it reads KRTAAQQASSTPDR.

It to M.tuberculosis Rv2917.

This is an uncharacterized protein from Mycobacterium leprae (strain TN).